The chain runs to 184 residues: SsrA-binding protein (184 aa).

The segment covering 1-11 (MAAKKSTPTDS) has biased composition (polar residues). Residues 1–31 (MAAKKSTPTDSGKSKGKKNKAQKGAGQKGAG) are disordered.

This sequence belongs to the SmpB family.

The protein localises to the cytoplasm. Required for rescue of stalled ribosomes mediated by trans-translation. Binds to transfer-messenger RNA (tmRNA), required for stable association of tmRNA with ribosomes. tmRNA and SmpB together mimic tRNA shape, replacing the anticodon stem-loop with SmpB. tmRNA is encoded by the ssrA gene; the 2 termini fold to resemble tRNA(Ala) and it encodes a 'tag peptide', a short internal open reading frame. During trans-translation Ala-aminoacylated tmRNA acts like a tRNA, entering the A-site of stalled ribosomes, displacing the stalled mRNA. The ribosome then switches to translate the ORF on the tmRNA; the nascent peptide is terminated with the 'tag peptide' encoded by the tmRNA and targeted for degradation. The ribosome is freed to recommence translation, which seems to be the essential function of trans-translation. The chain is SsrA-binding protein from Corynebacterium jeikeium (strain K411).